A 246-amino-acid polypeptide reads, in one-letter code: C-X-C motif chemokine 16 (246 aa).

Residues 1–26 (MRRGFGPLSLAFFLFLLALLTLPGDG) form the signal peptide. Residues 27–201 (NQGSVAGSCS…PGAGASTPAW (175 aa)) lie on the Extracellular side of the membrane. 2 cysteine pairs are disulfide-bonded: cysteine 35–cysteine 65 and cysteine 37–cysteine 79. Disordered stretches follow at residues 104–150 (GKSF…SGAL) and 175–198 (PEAE…GAST). The segment covering 128 to 146 (PSDTSTPAHSQSTQHSTLP) has biased composition (polar residues). Over residues 175-189 (PEAEANEKQQDDRQQ) the composition is skewed to basic and acidic residues. The chain crosses the membrane as a helical span at residues 202–222 (VPVLSLLAIVFFLTAAMAYVL). Over 223 to 246 (CNRRATQQNSAGLQLWYTPVEPRP) the chain is Cytoplasmic.

Belongs to the intercrine alpha (chemokine CxC) family. Post-translationally, glycosylated. As to expression, widely expressed. Not detected in purified B- and T-cells.

The protein localises to the membrane. Induces a strong chemotactic response. Induces calcium mobilization. Binds to CXCR6/Bonzo. Also acts as a scavenger receptor on macrophages, which specifically binds to OxLDL (oxidized low density lipoprotein), suggesting that it may be involved in pathophysiology such as atherogenesis. The sequence is that of C-X-C motif chemokine 16 (Cxcl16) from Mus musculus (Mouse).